We begin with the raw amino-acid sequence, 900 residues long: Phosphoenolpyruvate carboxylase (900 aa).

Residues His140 and Lys568 contribute to the active site.

This sequence belongs to the PEPCase type 1 family. Mg(2+) is required as a cofactor.

It catalyses the reaction oxaloacetate + phosphate = phosphoenolpyruvate + hydrogencarbonate. In terms of biological role, forms oxaloacetate, a four-carbon dicarboxylic acid source for the tricarboxylic acid cycle. This Neisseria meningitidis serogroup C / serotype 2a (strain ATCC 700532 / DSM 15464 / FAM18) protein is Phosphoenolpyruvate carboxylase.